The primary structure comprises 233 residues: Large ribosomal subunit protein uL1 (233 aa).

Belongs to the universal ribosomal protein uL1 family. Part of the 50S ribosomal subunit.

In terms of biological role, binds directly to 23S rRNA. The L1 stalk is quite mobile in the ribosome, and is involved in E site tRNA release. Functionally, protein L1 is also a translational repressor protein, it controls the translation of the L11 operon by binding to its mRNA. The polypeptide is Large ribosomal subunit protein uL1 (Shewanella frigidimarina (strain NCIMB 400)).